A 369-amino-acid chain; its full sequence is MNYECMTQDGRARRGRIIFDNGQIVQTPVFMPVGTQATVKGLSPEELDALGAEIILGNTFHLMLRPGAEIIQAHGGLHQFMHWQKPILTDSGGFQVFSLAKIRKLTEEGARFRSPIDGREVFLTPEKSIAVQHALNSNIIMQLDECTPYPATYDEAANSMRMSLRWARRSQQAHGDHANHLFGIVQGGIYPDLRQESAQALVELDLPGYAIGGLAVGEPKDAREATLDAVLPFVPKNKPRYLMGVGKPADLVEGVRRGIDMFDCVMPSRNARNAYLFTRFGILKLRNSRYKEDLRPIDETCNCYTCQRYSRSYLHHLDKCNEILGARLNTIHNLYYYVHLMHEMRRAIEEHRFDDFARAFYAEQECGND.

Asp-90 (proton acceptor) is an active-site residue. Substrate contacts are provided by residues 90–94 (DSGGF), Asp-144, Gln-186, and Gly-213. Residues 244 to 250 (GVGKPAD) form an RNA binding region. Catalysis depends on Asp-263, which acts as the Nucleophile. Residues Cys-301, Cys-303, Cys-306, and His-332 each coordinate Zn(2+).

This sequence belongs to the queuine tRNA-ribosyltransferase family. Homodimer. Within each dimer, one monomer is responsible for RNA recognition and catalysis, while the other monomer binds to the replacement base PreQ1. Requires Zn(2+) as cofactor.

It catalyses the reaction 7-aminomethyl-7-carbaguanine + guanosine(34) in tRNA = 7-aminomethyl-7-carbaguanosine(34) in tRNA + guanine. It participates in tRNA modification; tRNA-queuosine biosynthesis. In terms of biological role, catalyzes the base-exchange of a guanine (G) residue with the queuine precursor 7-aminomethyl-7-deazaguanine (PreQ1) at position 34 (anticodon wobble position) in tRNAs with GU(N) anticodons (tRNA-Asp, -Asn, -His and -Tyr). Catalysis occurs through a double-displacement mechanism. The nucleophile active site attacks the C1' of nucleotide 34 to detach the guanine base from the RNA, forming a covalent enzyme-RNA intermediate. The proton acceptor active site deprotonates the incoming PreQ1, allowing a nucleophilic attack on the C1' of the ribose to form the product. After dissociation, two additional enzymatic reactions on the tRNA convert PreQ1 to queuine (Q), resulting in the hypermodified nucleoside queuosine (7-(((4,5-cis-dihydroxy-2-cyclopenten-1-yl)amino)methyl)-7-deazaguanosine). This Dichelobacter nodosus (strain VCS1703A) protein is Queuine tRNA-ribosyltransferase.